A 210-amino-acid chain; its full sequence is MAEAAESAPAPPPAEPAAKKKKQQPKKAAAARGAAKSKKPSSGPSVSEQIVTAVSASKERSGVSLAALKKTLAAGGYDVDKNNSRLKLALKVTKETLLQVKGSGASGSFKLNKKQLQSKDKAAAKKKAPLAAEAKKPAAAAKKTAKSPKKPKKVSAAAKSPKKLKKPAKAAKSPAKKTAVKPKVAAKSPAKAKAAKPKVAKAKKAAPKKK.

2 disordered regions span residues 1–49 (MAEA…VSEQ) and 101–210 (KGSG…PKKK). Low complexity-rich tracts occupy residues 26–45 (KKAAAARGAAKSKKPSSGPS) and 129–142 (PLAAEAKKPAAAAK). In terms of domain architecture, H15 spans 42–113 (SGPSVSEQIV…GASGSFKLNK (72 aa)). Basic residues-rich tracts occupy residues 143–153 (KTAKSPKKPKK) and 160–180 (SPKKLKKPAKAAKSPAKKTAV). Residues 181–192 (KPKVAAKSPAKA) are compositionally biased toward low complexity. The span at 193–210 (KAAKPKVAKAKKAAPKKK) shows a compositional bias: basic residues.

It belongs to the histone H1/H5 family.

The protein localises to the nucleus. It localises to the chromosome. In terms of biological role, histones H1 are necessary for the condensation of nucleosome chains into higher-order structures. This Xenopus laevis (African clawed frog) protein is Histone H1A.